Here is an 83-residue protein sequence, read N- to C-terminus: Mu-theraphotoxin-Hhn2b 2 (83 aa).

An N-terminal signal peptide occupies residues 1–21 (MKASMFLALAGLVLLFVVCYA). The propeptide occupies 22 to 48 (SESEEKEFPRELISKIFTVDDFKGEER). 3 cysteine pairs are disulfide-bonded: cysteine 50-cysteine 65, cysteine 57-cysteine 70, and cysteine 64-cysteine 77. Position 81 is a leucine amide (leucine 81).

It belongs to the neurotoxin 10 (Hwtx-1) family. 14 (Hntx-1) subfamily. As to quaternary structure, monomer. Expressed by the venom gland.

It localises to the secreted. Functionally, weakly blocks the rat SCN2A/SCN1B (Nav1.2/beta-1) sodium channel (IC(50)=68 uM) and the insect sodium channel para/tipE (IC(50)=4.3 uM), without altering the activation or inactivation kinetics (depressant toxin). This Cyriopagopus hainanus (Chinese bird spider) protein is Mu-theraphotoxin-Hhn2b 2.